The following is a 1057-amino-acid chain: Carbamoyl phosphate synthase large chain (1057 aa).

Residues 1-401 (MPKNKDINTI…SLLKAIRSLE (401 aa)) are carboxyphosphate synthetic domain. Arg-129, Arg-169, Gly-175, Gly-176, Lys-208, Ile-210, Glu-215, Gly-241, Ile-242, His-243, Gln-284, and Glu-298 together coordinate ATP. Positions 133–327 (RSLMNELDVP…IAKLAAKIAV (195 aa)) constitute an ATP-grasp 1 domain. Residues Gln-284, Glu-298, and Asn-300 each coordinate Mg(2+). Mn(2+) contacts are provided by Gln-284, Glu-298, and Asn-300. The interval 402-546 (YGVHHLGLPN…YGTYERDNES (145 aa)) is oligomerization domain. Residues 547-929 (VVTDKEKVIV…ALFKGLTASG (383 aa)) are carbamoyl phosphate synthetic domain. Residues 671-861 (EALLNKIDVP…MAQLAMRAIL (191 aa)) enclose the ATP-grasp 2 domain. Positions 707, 746, 748, 752, 777, 778, 779, 780, 820, and 832 each coordinate ATP. Positions 820, 832, and 834 each coordinate Mg(2+). Residues Gln-820, Glu-832, and Asn-834 each coordinate Mn(2+). The MGS-like domain occupies 930 to 1057 (VEVKDHGTVL…ESMSFTMKQM (128 aa)). The allosteric domain stretch occupies residues 930–1057 (VEVKDHGTVL…ESMSFTMKQM (128 aa)).

Belongs to the CarB family. As to quaternary structure, composed of two chains; the small (or glutamine) chain promotes the hydrolysis of glutamine to ammonia, which is used by the large (or ammonia) chain to synthesize carbamoyl phosphate. Tetramer of heterodimers (alpha,beta)4. Mg(2+) is required as a cofactor. Mn(2+) serves as cofactor.

The enzyme catalyses hydrogencarbonate + L-glutamine + 2 ATP + H2O = carbamoyl phosphate + L-glutamate + 2 ADP + phosphate + 2 H(+). The catalysed reaction is hydrogencarbonate + NH4(+) + 2 ATP = carbamoyl phosphate + 2 ADP + phosphate + 2 H(+). It functions in the pathway amino-acid biosynthesis; L-arginine biosynthesis; carbamoyl phosphate from bicarbonate: step 1/1. The protein operates within pyrimidine metabolism; UMP biosynthesis via de novo pathway; (S)-dihydroorotate from bicarbonate: step 1/3. In terms of biological role, large subunit of the glutamine-dependent carbamoyl phosphate synthetase (CPSase). CPSase catalyzes the formation of carbamoyl phosphate from the ammonia moiety of glutamine, carbonate, and phosphate donated by ATP, constituting the first step of 2 biosynthetic pathways, one leading to arginine and/or urea and the other to pyrimidine nucleotides. The large subunit (synthetase) binds the substrates ammonia (free or transferred from glutamine from the small subunit), hydrogencarbonate and ATP and carries out an ATP-coupled ligase reaction, activating hydrogencarbonate by forming carboxy phosphate which reacts with ammonia to form carbamoyl phosphate. The polypeptide is Carbamoyl phosphate synthase large chain (Staphylococcus carnosus (strain TM300)).